Consider the following 1987-residue polypeptide: Transcriptional activator DEMETER (1987 aa).

Disordered stretches follow at residues threonine 246–proline 378, aspartate 392–alanine 415, and methionine 793–glycine 901. Polar residues predominate over residues serine 258–asparagine 277. A compositionally biased stretch (basic and acidic residues) spans alanine 341 to threonine 364. Polar residues predominate over residues asparagine 813–valine 829. Residues proline 844 to serine 855 are compositionally biased toward basic residues. The segment at lysine 955–proline 1054 is DEMETER. Disordered regions lie at residues leucine 1324–methionine 1351 and threonine 1439–methionine 1471. Basic and acidic residues-rich tracts occupy residues glutamate 1338–methionine 1351 and serine 1452–asparagine 1469. Residues cysteine 1629, cysteine 1636, cysteine 1639, and cysteine 1645 each contribute to the [4Fe-4S] cluster site.

Belongs to the DNA glycosylase family. DEMETER subfamily. It depends on [4Fe-4S] cluster as a cofactor. Mainly expressed in immature flower buds, then decreases as the flower matures. Expressed in the ovule carpels, but not expressed in pollen stamens. Expressed in developing and mature ovules (stages 12-14), then strongly decreases after fertilization.

Its subcellular location is the nucleus. Transcriptional activator involved in gene imprinting. Catalyzes the release of 5-methylcytosine (5-meC) from DNA by a glycosylase/lyase mechanism. Allows the expression of the maternal copy of the imprinted MEA gene before fertilization, possibly by antagonizing or suppressing DNA methylation on target promoter. Probably acts by nicking the MEA promoter. Required for stable reproducible patterns of floral and vegetative development. The sequence is that of Transcriptional activator DEMETER (DME) from Arabidopsis thaliana (Mouse-ear cress).